We begin with the raw amino-acid sequence, 189 residues long: GTPase NRas (189 aa).

GTP-binding positions include 10–18 and 29–30; these read GAGGVGKSA and VD. The Effector region signature appears at 32–40; the sequence is YDPTIEDSY. (Microbial infection) O-linked (Glc) threonine; by P.sordellii toxin TcsL glycosylation is present at T35. 57 to 61 lines the GTP pocket; sequence DTAGQ. A Phosphoserine modification is found at S89. 116 to 119 serves as a coordination point for GTP; sequence NKCD. Residues 166-185 are hypervariable region; sequence YRMKKLNSSDDGTQGCMGLP. A Glycyl lysine isopeptide (Lys-Gly) (interchain with G-Cter in ubiquitin) cross-link involves residue K170. A lipid anchor (S-palmitoyl cysteine) is attached at C181. C186 carries the S-farnesyl cysteine lipid modification. Positions 187–189 are cleaved as a propeptide — removed in mature form; sequence VVM.

It belongs to the small GTPase superfamily. Ras family. Interacts (active GTP-bound form preferentially) with RGS14. Interacts (active GTP-bound form) with RASSF7. Interacts (active GTP-bound form) with both SHOC2 and PP1c (all isoforms) to form a tertiary complex; SHOC2 and PP1c preferably bind M-Ras/MRAS, but they also bind K-Ras/KRAS, N-Ras/NRAS and H-Ras/HRAS. In terms of processing, palmitoylated by the ZDHHC9-GOLGA7 complex. Depalmitoylated by ABHD17A, ABHD17B and ABHD17C. A continuous cycle of de- and re-palmitoylation regulates rapid exchange between plasma membrane and Golgi. Acetylation at Lys-104 prevents interaction with guanine nucleotide exchange factors (GEFs). Post-translationally, fatty-acylated at Lys-169 and/or Lys-170. In terms of processing, ubiquitinated by the BCR(LZTR1) E3 ubiquitin ligase complex at Lys-170 in a non-degradative manner, leading to inhibit Ras signaling by decreasing Ras association with membranes. Phosphorylation at Ser-89 enhances NRAS association with its downstream effectors. Post-translationally, (Microbial infection) Glucosylated at Thr-35 by P.sordellii toxin TcsL.

The protein resides in the cell membrane. Its subcellular location is the golgi apparatus membrane. The catalysed reaction is GTP + H2O = GDP + phosphate + H(+). Its activity is regulated as follows. Alternates between an inactive form bound to GDP and an active form bound to GTP. Activated by a guanine nucleotide-exchange factor (GEF) and inactivated by a GTPase-activating protein (GAP). Its function is as follows. Ras proteins bind GDP/GTP and possess intrinsic GTPase activity. This chain is GTPase NRas (NRAS), found in Homo sapiens (Human).